The chain runs to 146 residues: Large ribosomal subunit protein uL15 (146 aa).

The tract at residues 1 to 56 (MGLRLNELSPGVGAKKTAQRRGRGIGSGLGKTGGRGVKGQKSRSGSSVRSGFEGGQ) is disordered. Residues 24-37 (GIGSGLGKTGGRGV) are compositionally biased toward gly residues.

It belongs to the universal ribosomal protein uL15 family. Part of the 50S ribosomal subunit.

Binds to the 23S rRNA. The sequence is that of Large ribosomal subunit protein uL15 from Psychrobacter arcticus (strain DSM 17307 / VKM B-2377 / 273-4).